The primary structure comprises 587 residues: Aspartate--tRNA(Asp/Asn) ligase (587 aa).

Residue E173 coordinates L-aspartate. An aspartate region spans residues Q197–K200. R219 is an L-aspartate binding site. ATP is bound by residues R219 to E221 and Q228. H448 contacts L-aspartate. E481 is a binding site for ATP. An L-aspartate-binding site is contributed by R488. G533–R536 is an ATP binding site.

It belongs to the class-II aminoacyl-tRNA synthetase family. Type 1 subfamily. As to quaternary structure, homodimer.

The protein localises to the cytoplasm. It catalyses the reaction tRNA(Asx) + L-aspartate + ATP = L-aspartyl-tRNA(Asx) + AMP + diphosphate. Functionally, aspartyl-tRNA synthetase with relaxed tRNA specificity since it is able to aspartylate not only its cognate tRNA(Asp) but also tRNA(Asn). Reaction proceeds in two steps: L-aspartate is first activated by ATP to form Asp-AMP and then transferred to the acceptor end of tRNA(Asp/Asn). The protein is Aspartate--tRNA(Asp/Asn) ligase of Alcanivorax borkumensis (strain ATCC 700651 / DSM 11573 / NCIMB 13689 / SK2).